The primary structure comprises 753 residues: 5-methyltetrahydropteroyltriglutamate--homocysteine methyltransferase (753 aa).

Residues 17 to 20 (RELK) and Lys-117 contribute to the 5-methyltetrahydropteroyltri-L-glutamate site. Residues 431–433 (IGS) and Glu-484 each bind L-homocysteine. L-methionine contacts are provided by residues 431–433 (IGS) and Glu-484. Residues 515 to 516 (RC) and Trp-561 each bind 5-methyltetrahydropteroyltri-L-glutamate. Asp-599 lines the L-homocysteine pocket. Residue Asp-599 coordinates L-methionine. Residue Glu-605 coordinates 5-methyltetrahydropteroyltri-L-glutamate. Zn(2+) is bound by residues His-641, Cys-643, and Glu-665. The active-site Proton donor is the His-694. Cys-726 is a binding site for Zn(2+).

Belongs to the vitamin-B12 independent methionine synthase family. Zn(2+) serves as cofactor.

It carries out the reaction 5-methyltetrahydropteroyltri-L-glutamate + L-homocysteine = tetrahydropteroyltri-L-glutamate + L-methionine. The protein operates within amino-acid biosynthesis; L-methionine biosynthesis via de novo pathway; L-methionine from L-homocysteine (MetE route): step 1/1. Its function is as follows. Catalyzes the transfer of a methyl group from 5-methyltetrahydrofolate to homocysteine resulting in methionine formation. In Escherichia coli O8 (strain IAI1), this protein is 5-methyltetrahydropteroyltriglutamate--homocysteine methyltransferase.